The chain runs to 631 residues: Phosphomethylpyrimidine synthase (631 aa).

Substrate contacts are provided by residues Asn239, Met268, Tyr297, His333, 353 to 355 (SRG), 394 to 397 (DGLR), and Glu433. Residue His437 participates in Zn(2+) binding. Tyr460 lines the substrate pocket. Residue His501 participates in Zn(2+) binding. [4Fe-4S] cluster is bound by residues Cys581, Cys584, and Cys589.

The protein belongs to the ThiC family. In terms of assembly, homodimer. [4Fe-4S] cluster serves as cofactor.

The enzyme catalyses 5-amino-1-(5-phospho-beta-D-ribosyl)imidazole + S-adenosyl-L-methionine = 4-amino-2-methyl-5-(phosphooxymethyl)pyrimidine + CO + 5'-deoxyadenosine + formate + L-methionine + 3 H(+). It participates in cofactor biosynthesis; thiamine diphosphate biosynthesis. In terms of biological role, catalyzes the synthesis of the hydroxymethylpyrimidine phosphate (HMP-P) moiety of thiamine from aminoimidazole ribotide (AIR) in a radical S-adenosyl-L-methionine (SAM)-dependent reaction. This chain is Phosphomethylpyrimidine synthase, found in Shigella dysenteriae serotype 1 (strain Sd197).